A 346-amino-acid chain; its full sequence is Peripherin-2 (346 aa).

Over 1–24 the chain is Cytoplasmic; it reads MALLKVKFDQKKRVKLAQGLWLMN. The helical transmembrane segment at 25–43 threads the bilayer; it reads WLSVLAGIVLFSLGLFLKI. The Lumenal segment spans residues 44–61; that stretch reads ELRKRSEVMNNSESHFVP. N-linked (GlcNAc...) asparagine glycosylation is present at asparagine 53. Residues 62–80 traverse the membrane as a helical segment; the sequence is NSLIGVGVLSCVFNSLAGK. Topologically, residues 81–99 are cytoplasmic; the sequence is ICYDALDPAKYAKWKPWLK. The helical transmembrane segment at 100 to 123 threads the bilayer; it reads PYLAVCIFFNVILFLVALCCFLLR. Topologically, residues 124–264 are lumenal; it reads GSLESTLAYG…LNYYSSLMNS (141 aa). Residue asparagine 229 is glycosylated (N-linked (GlcNAc...) asparagine). Residues 265–290 form a helical membrane-spanning segment; sequence MGVVTLLVWLFEVSITAGLRYLHTAL. The Cytoplasmic segment spans residues 291–346; sequence ESVSNPEDPECESEGWLLEKSVPETWKAFLESFKKLGKSNQVEAEGADAGPAPEAG. Positions 341–346 are interaction with MREG; the sequence is PAPEAG.

The protein belongs to the PRPH2/ROM1 family. In terms of assembly, homodimer; disulfide-linked. Forms a homotetramer. Forms a heterotetramer with ROM1. Homotetramer and heterotetramer core complexes go on to form higher order complexes by formation of intermolecular disulfide bonds. Interacts with MREG. Interacts with STX3 isoform 3B. Interacts with SNAP25. In terms of tissue distribution, expressed in the retina (at protein level).

It is found in the membrane. The protein localises to the cell projection. It localises to the cilium. Its subcellular location is the photoreceptor outer segment. The protein resides in the photoreceptor inner segment. In terms of biological role, essential for retina photoreceptor outer segment disk morphogenesis, may also play a role with ROM1 in the maintenance of outer segment disk structure. Required for the maintenance of retinal outer nuclear layer thickness. Required for the correct development and organization of the photoreceptor inner segment. This chain is Peripherin-2 (Prph2), found in Mus musculus (Mouse).